The following is a 224-amino-acid chain: Peptidyl-prolyl cis-trans isomerase CYP21-1 (224 aa).

A signal peptide spans 1 to 27 (MRREISFLLQPRCLLLLVALTIFLVFA). In terms of domain architecture, PPIase cyclophilin-type spans 50 to 214 (FLDVDIDGQR…KKVVIADSGE (165 aa)). Asparagine 158 is a glycosylation site (N-linked (GlcNAc...) asparagine).

This sequence belongs to the cyclophilin-type PPIase family. Ubiquitous.

The protein localises to the endoplasmic reticulum. The enzyme catalyses [protein]-peptidylproline (omega=180) = [protein]-peptidylproline (omega=0). Functionally, PPIases accelerate the folding of proteins. It catalyzes the cis-trans isomerization of proline imidic peptide bonds in oligopeptides. The polypeptide is Peptidyl-prolyl cis-trans isomerase CYP21-1 (CYP21-1) (Arabidopsis thaliana (Mouse-ear cress)).